A 420-amino-acid chain; its full sequence is Tyrosine--tRNA ligase (420 aa).

L-tyrosine is bound at residue tyrosine 36. The 'HIGH' region motif lies at 41–50 (PTADSLHIGH). The L-tyrosine site is built by tyrosine 170 and glutamine 174. Positions 231–235 (KFGKT) match the 'KMSKS' region motif. Lysine 234 is a binding site for ATP. The S4 RNA-binding domain occupies 353-420 (RNIVEVIVET…KKKYFMVNYK (68 aa)).

Belongs to the class-I aminoacyl-tRNA synthetase family. TyrS type 1 subfamily. As to quaternary structure, homodimer.

It localises to the cytoplasm. It carries out the reaction tRNA(Tyr) + L-tyrosine + ATP = L-tyrosyl-tRNA(Tyr) + AMP + diphosphate + H(+). Catalyzes the attachment of tyrosine to tRNA(Tyr) in a two-step reaction: tyrosine is first activated by ATP to form Tyr-AMP and then transferred to the acceptor end of tRNA(Tyr). In Staphylococcus saprophyticus subsp. saprophyticus (strain ATCC 15305 / DSM 20229 / NCIMB 8711 / NCTC 7292 / S-41), this protein is Tyrosine--tRNA ligase.